Here is a 341-residue protein sequence, read N- to C-terminus: Calcium-binding protein 39 (341 aa).

This sequence belongs to the Mo25 family. In terms of assembly, component of a trimeric complex composed of STK11/LKB1, STRAD (STRADA or STRADB) and CAB39/MO25 (CAB39/MO25alpha or CAB39L/MO25beta): the complex tethers STK11/LKB1 in the cytoplasm and stimulates its catalytic activity.

The protein localises to the cytoplasm. Its function is as follows. Component of a complex that binds and activates STK11/LKB1. In the complex, required to stabilize the interaction between CAB39/MO25 (CAB39/MO25alpha or CAB39L/MO25beta) and STK11/LKB1. In Bos taurus (Bovine), this protein is Calcium-binding protein 39 (CAB39).